The sequence spans 723 residues: FACT complex subunit Ssrp1 (723 aa).

S443 is subject to Phosphoserine. 2 disordered regions span residues 459–564 (EARE…AFML) and 586–723 (AKKG…EASD). 2 stretches are compositionally biased toward acidic residues: residues 464-478 (EEDD…ESTD) and 486-507 (NESD…DDSD). Positions 531 to 557 (KKEKKHKEKERTKKPSKKKKDSGKPKR) are enriched in basic residues. A DNA-binding region (HMG box) is located at residues 555–621 (PKRATTAFML…RYHDEMRNYK (67 aa)). Positions 586-621 (AKKGGEMWKELKDKSKWEDAAAKDKQRYHDEMRNYK) are enriched in basic and acidic residues. Residue S628 is modified to Phosphoserine. Over residues 644-656 (PSPSKKANTSGSG) the composition is skewed to polar residues. Phosphoserine is present on residues S664 and S668. Acidic residues predominate over residues 664–676 (SDDDSTSSDDEKD). T669 bears the Phosphothreonine mark. A phosphoserine mark is found at S670 and S671. The segment covering 677-692 (NEPAKKKSKPPSDGDA) has biased composition (basic and acidic residues). Positions 702-723 (EPEESEEDSNASDEDEEDEASD) are enriched in acidic residues.

The protein belongs to the SSRP1 family. Component of the FACT complex, a stable heterodimer of dre4/spt16 and Ssrp. Interacts with CHD1 and TRL/GAGA. Expressed at highest levels in nurse cells of the ovary.

Its subcellular location is the nucleus. The protein resides in the chromosome. It localises to the nucleolus. Functionally, component of the FACT complex, a general chromatin factor that acts to reorganize nucleosomes. The FACT complex is involved in multiple processes that require DNA as a template such as mRNA elongation, DNA replication and DNA repair. During transcription elongation the FACT complex acts as a histone chaperone that both destabilizes and restores nucleosomal structure. It facilitates the passage of RNA polymerase II and transcription by promoting the dissociation of one histone H2A-H2B dimer from the nucleosome, then subsequently promotes the reestablishment of the nucleosome following the passage of RNA polymerase II. Binds specifically to single-stranded DNA and RNA with highest affinity for nucleotides G and U. The FACT complex is required for expression of Hox genes. This is FACT complex subunit Ssrp1 (Ssrp) from Drosophila melanogaster (Fruit fly).